We begin with the raw amino-acid sequence, 137 residues long: Fluoride-specific ion channel FluC 1 (137 aa).

A run of 4 helical transmembrane segments spans residues 4-24, 37-57, 67-87, and 98-118; these read LIYIIVGIAGILGALSRYYLG, LATLLINLAGCFLLAWLTTYI, VITGIGTGFIGSFTTFSTLSV, and WGIAFLYVSCSILGGLIMSGL. Gly-77 and Thr-80 together coordinate Na(+).

It belongs to the fluoride channel Fluc/FEX (TC 1.A.43) family.

It localises to the cell membrane. It carries out the reaction fluoride(in) = fluoride(out). With respect to regulation, na(+) is not transported, but it plays an essential structural role and its presence is essential for fluoride channel function. In terms of biological role, fluoride-specific ion channel. Important for reducing fluoride concentration in the cell, thus reducing its toxicity. The protein is Fluoride-specific ion channel FluC 1 of Bacillus anthracis.